We begin with the raw amino-acid sequence, 151 residues long: Small ribosomal subunit protein eS6 (151 aa).

It belongs to the eukaryotic ribosomal protein eS6 family.

The chain is Small ribosomal subunit protein eS6 from Pyrobaculum calidifontis (strain DSM 21063 / JCM 11548 / VA1).